The following is a 101-amino-acid chain: Enhancer of yellow 2 transcription factor (101 aa).

It belongs to the ENY2 family. In terms of assembly, component of the nuclear pore complex (NPC)-associated AMEX complex (anchoring and mRNA export complex), composed of at least e(y)2 and xmas-2. Component of the SAGA transcription coactivator-HAT complexes, at least composed of Ada2b, e(y)2, Pcaf/Gcn5, Taf10 and Nipped-A/Trrap. Within the SAGA complex, e(y)2, Sgf11, and not/nonstop form an additional subcomplex of SAGA called the DUB module (deubiquitination module). Component of the THO complex, composed of at least e(y)2, HPR1, THO2, THOC5, THOC6 and THOC7. Interacts with e(y)1. Interacts with su(Hw) (via zinc fingers). Interacts with xmas-2; required for localization to the nuclear periphery. Interacts with the nuclear pore complex (NPC).

The protein localises to the nucleus. The protein resides in the nucleoplasm. It is found in the cytoplasm. In terms of biological role, involved in mRNA export coupled transcription activation by association with both the AMEX and the SAGA complexes. The SAGA complex is a multiprotein complex that activates transcription by remodeling chromatin and mediating histone acetylation and deubiquitination. Within the SAGA complex, participates in a subcomplex that specifically deubiquitinates histone H2B. The SAGA complex is recruited to specific gene promoters by activators, where it is required for transcription. Required for nuclear receptor-mediated transactivation. Involved in transcription elongation by recruiting the THO complex onto nascent mRNA. The AMEX complex functions in docking export-competent ribonucleoprotein particles (mRNPs) to the nuclear entrance of the nuclear pore complex (nuclear basket). AMEX participates in mRNA export and accurate chromatin positioning in the nucleus by tethering genes to the nuclear periphery. The sequence is that of Enhancer of yellow 2 transcription factor from Drosophila yakuba (Fruit fly).